A 268-amino-acid chain; its full sequence is 4-hydroxy-tetrahydrodipicolinate reductase (268 aa).

8–13 is a binding site for NAD(+); that stretch reads GAAGRM. Arg-36 is an NADP(+) binding site. NAD(+) is bound by residues 99-101 and 123-126; these read GTT and AANF. His-156 serves as the catalytic Proton donor/acceptor. Residue His-157 participates in (S)-2,3,4,5-tetrahydrodipicolinate binding. The Proton donor role is filled by Lys-160. (S)-2,3,4,5-tetrahydrodipicolinate is bound at residue 166 to 167; it reads GT.

It belongs to the DapB family.

The protein localises to the cytoplasm. The enzyme catalyses (S)-2,3,4,5-tetrahydrodipicolinate + NAD(+) + H2O = (2S,4S)-4-hydroxy-2,3,4,5-tetrahydrodipicolinate + NADH + H(+). It carries out the reaction (S)-2,3,4,5-tetrahydrodipicolinate + NADP(+) + H2O = (2S,4S)-4-hydroxy-2,3,4,5-tetrahydrodipicolinate + NADPH + H(+). It functions in the pathway amino-acid biosynthesis; L-lysine biosynthesis via DAP pathway; (S)-tetrahydrodipicolinate from L-aspartate: step 4/4. In terms of biological role, catalyzes the conversion of 4-hydroxy-tetrahydrodipicolinate (HTPA) to tetrahydrodipicolinate. This Pseudomonas fluorescens (strain Pf0-1) protein is 4-hydroxy-tetrahydrodipicolinate reductase.